The chain runs to 430 residues: MFARHPNLLWLNKQLSILHYLCLVFLAVYYAYPLLFGIMPRKLQLEDENSFVIMGVADPQIEGNHKIEANGFFKGTLDLWGNDLFLRHLVHMNQFWGQPDAMILLGDLVSFQHLDNEEFNKRAKRLKKITGAKNFWQVGNSSLPARTFENGNIPVWTIAGNHDIGYGCESSDAQISKWEQAMGPVNWVSHFNVSKFPVRVIGINSLSLDDVQFYDANPSDIINSKSFSSLGILALSKEARDAWQFLFDIALEPSIPTILFTHVPLYKPANVCVDEPRIVRQLDFRVKSQNHLSYNTTMKIFELIPSIKLVLSGHDHMGCDYEHPNGAIEHTLPSAMGYFGGNIGFVKLIATNDVLTESSKNTPSVVTFLIQKLIGQRWKKASLKQSKFSSDIYATYTLSHGGPSYIWWALHISVCVLTILRLLVISLQHI.

2 helical membrane-spanning segments follow: residues 20–40 and 405–425; these read YLCL…GIMP and YIWW…LLVI.

Its subcellular location is the membrane. This is an uncharacterized protein from Schizosaccharomyces pombe (strain 972 / ATCC 24843) (Fission yeast).